Reading from the N-terminus, the 87-residue chain is MKTLLLTLVVVTIVCLDLGYTRTCLISPSSPPQTCPKGEDICIVKARCDEWCLRRGPLIERGCAATCPEFRSNYRSLLCCTTDNCNH.

A signal peptide spans 1 to 21; the sequence is MKTLLLTLVVVTIVCLDLGYT. Disulfide bonds link Cys-24–Cys-42, Cys-35–Cys-63, Cys-48–Cys-52, Cys-67–Cys-79, and Cys-80–Cys-85.

This sequence belongs to the three-finger toxin family. Long-chain subfamily. Kappa-neurotoxin sub-subfamily. Homo- and heterodimer; non-covalently linked. As to expression, expressed by the venom gland.

It localises to the secreted. In terms of biological role, postsynaptic neurotoxin that binds and inhibits neuronal nicotinic acetylcholine receptors (nAChR) with high affinity (IC(50)&lt;100 nM). Is a selective, and slowly reversible antagonist of alpha-3/CHRNA3-containing and some alpha-4/CHRNA4-containing AChRs. The protein is Kappa-4-bungarotoxin of Bungarus multicinctus (Many-banded krait).